Here is a 298-residue protein sequence, read N- to C-terminus: Uricase (298 aa).

Catalysis depends on charge relay system residues Lys-18 and Thr-63. Urate is bound by residues Thr-63, Asp-64, Phe-165, Arg-182, Val-229, Gln-230, and Asn-256. The active-site Charge relay system is the His-258. A Microbody targeting signal motif is present at residues 296 to 298 (ARM).

Belongs to the uricase family. In terms of assembly, homotetramer; dimer of dimers.

The protein resides in the peroxisome. The catalysed reaction is urate + O2 + H2O = 5-hydroxyisourate + H2O2. The protein operates within purine metabolism; urate degradation; (S)-allantoin from urate: step 1/3. Competitively inhibited by xanthine. Functionally, catalyzes the oxidation of uric acid to 5-hydroxyisourate, which is further processed to form (S)-allantoin. The chain is Uricase from Danio rerio (Zebrafish).